We begin with the raw amino-acid sequence, 420 residues long: uncharacterized protein (420 aa).

This sequence belongs to the mimivirus R160 family.

It localises to the virion. This is an uncharacterized protein from Acanthamoeba polyphaga mimivirus (APMV).